Consider the following 417-residue polypeptide: Vacuolar cation/proton exchanger 3 (417 aa).

The Cytoplasmic portion of the chain corresponds to 1–45 (MENPQIEMGAFKANGPQLQNGGLRSSMVQSWNLQRFVESALRSIR). The chain crosses the membrane as a helical span at residues 46–66 (IVIFTSKLNLLLPFGPASIIL). The Extracellular portion of the chain corresponds to 67 to 73 (HYTTSRH). Residues 74–94 (GLVFLFSMLGITPLAERLGYA) form a helical membrane-spanning segment. Residues 95 to 105 (TEQLAIYTGPT) are Cytoplasmic-facing. Residues 106–126 (VGGLLNATFGNATEMIIAIYA) form a helical membrane-spanning segment. Residues 115-150 (GNATEMIIAIYALKNGMIRVVQQSLLGSILSNMLLV) are cation selection. Over 127–140 (LKNGMIRVVQQSLL) the chain is Extracellular. A helical transmembrane segment spans residues 141-161 (GSILSNMLLVMGCAFFAGGIV). The Cytoplasmic portion of the chain corresponds to 162 to 173 (HRNKDQVFSKAT). The chain crosses the membrane as a helical span at residues 174 to 194 (AVVNSGLLLMAVMGLMFPAVL). Topologically, residues 195-207 (HFTHSEVRQGASE) are extracellular. The helical transmembrane segment at 208–230 (VSLSRFSSCIMLVAYASYLYFQL) threads the bilayer. Over 231-258 (SGRNNAYSPIGSEEMPNEDAAEEDEESE) the chain is Cytoplasmic. The chain crosses the membrane as a helical span at residues 259 to 279 (IGMWESIAWLAMLTLWVSILS). Residues 280 to 291 (EYLVNAIEGASD) are Extracellular-facing. Residues 292–312 (SLNLPVAFISVILLPIVGNAA) form a helical membrane-spanning segment. The tract at residues 309-344 (GNAAEHASAIMFAMKDKLDITLGVAIGSSTQISMFV) is cation selection. The Cytoplasmic segment spans residues 313-330 (EHASAIMFAMKDKLDITL). Residues 331–351 (GVAIGSSTQISMFVIPFCVVI) form a helical membrane-spanning segment. At 352-360 (GWMMGQKMD) the chain is on the extracellular side. Residues 361–381 (LNFQLFETATLFITVLVVAFM) traverse the membrane as a helical segment. Residues 382-389 (LQDGVANY) lie on the Cytoplasmic side of the membrane. Residues 390–410 (LKGLMLILCYLIVAASFFVHV) form a helical membrane-spanning segment. At 411–417 (DPQSSDD) the chain is on the extracellular side.

Belongs to the Ca(2+):cation antiporter (CaCA) (TC 2.A.19) family. Cation/proton exchanger (CAX) subfamily. Ubiquitous.

It is found in the vacuole membrane. In terms of biological role, vacuolar cation/proton exchanger (CAX). Translocates Ca(2+) and other metal ions into vacuoles using the proton gradient formed by H(+)-ATPase and H(+)-pyrophosphatase. The polypeptide is Vacuolar cation/proton exchanger 3 (CAX3) (Oryza sativa subsp. japonica (Rice)).